The chain runs to 146 residues: Aspartate 1-decarboxylase (146 aa).

The active-site Schiff-base intermediate with substrate; via pyruvic acid is serine 25. Serine 25 is modified (pyruvic acid (Ser)). Threonine 57 contacts substrate. Catalysis depends on tyrosine 58, which acts as the Proton donor. Substrate is bound at residue 73 to 75 (GPA).

This sequence belongs to the PanD family. As to quaternary structure, heterooctamer of four alpha and four beta subunits. Requires pyruvate as cofactor. In terms of processing, is synthesized initially as an inactive proenzyme, which is activated by self-cleavage at a specific serine bond to produce a beta-subunit with a hydroxyl group at its C-terminus and an alpha-subunit with a pyruvoyl group at its N-terminus.

The protein resides in the cytoplasm. It carries out the reaction L-aspartate + H(+) = beta-alanine + CO2. The protein operates within cofactor biosynthesis; (R)-pantothenate biosynthesis; beta-alanine from L-aspartate: step 1/1. In terms of biological role, catalyzes the pyruvoyl-dependent decarboxylation of aspartate to produce beta-alanine. This chain is Aspartate 1-decarboxylase, found in Salinibacter ruber (strain DSM 13855 / M31).